The primary structure comprises 303 residues: Glutathione transport system permease protein GsiD (303 aa).

The next 6 helical transmembrane spans lie at 40-60 (AMTAALFVILLIVVAIFARWI), 105-125 (LAAGVFAVFIGAAIGTLLGLL), 144-164 (LFAFPGILLAIAVVAVLGSGI), 165-185 (ANVIIAVAIFSIPAFARLVRG), 222-242 (IVVFFTMRIGTSIISAASLSF), and 266-286 (VIAPHVAVFPALAIFLTVLAF). The 190-residue stretch at 101 to 290 (AQISLAAGVF…LTVLAFNLLG (190 aa)) folds into the ABC transmembrane type-1 domain.

It belongs to the binding-protein-dependent transport system permease family. In terms of assembly, the complex is composed of two ATP-binding proteins (GsiA), two transmembrane proteins (GsiC and GsiD) and a solute-binding protein (GsiB).

The protein resides in the cell inner membrane. Part of the ABC transporter complex GsiABCD involved in glutathione import. Probably responsible for the translocation of the substrate across the membrane. This is Glutathione transport system permease protein GsiD from Escherichia coli O1:K1 / APEC.